A 237-amino-acid polypeptide reads, in one-letter code: Segregation and condensation protein A (237 aa).

This sequence belongs to the ScpA family. Component of a cohesin-like complex composed of ScpA, ScpB and the Smc homodimer, in which ScpA and ScpB bind to the head domain of Smc. The presence of the three proteins is required for the association of the complex with DNA.

The protein resides in the cytoplasm. Its function is as follows. Participates in chromosomal partition during cell division. May act via the formation of a condensin-like complex containing Smc and ScpB that pull DNA away from mid-cell into both cell halves. This chain is Segregation and condensation protein A, found in Streptococcus thermophilus (strain ATCC BAA-250 / LMG 18311).